We begin with the raw amino-acid sequence, 535 residues long: Unconventional prefoldin RPB5 interactor 1 (535 aa).

Met-1 is modified (N-acetylmethionine). 4 disordered regions span residues Met-1 to Val-23, Leu-223 to Asn-330, Lys-352 to Pro-383, and Ser-412 to Phe-431. Pro residues predominate over residues Glu-7 to Pro-18. Polar residues-rich tracts occupy residues Thr-253 to His-265 and Glu-276 to Tyr-296. Residues Asp-299–Asn-320 are compositionally biased toward acidic residues. Residue Ser-372 is modified to Phosphoserine; by RPS6KB1. A Phosphothreonine modification is found at Thr-373. Residues Asn-417–Ser-427 are compositionally biased toward polar residues. Position 442 is a phosphoserine (Ser-442).

This sequence belongs to the RNA polymerase II subunit 5-mediating protein family. In terms of assembly, homodimer. Component of the PAQosome complex which is responsible for the biogenesis of several protein complexes and which consists of R2TP complex members RUVBL1, RUVBL2, RPAP3 and PIH1D1, URI complex members PFDN2, PFDN6, PDRG1, UXT and URI1 as well as ASDURF, POLR2E and DNAAF10/WDR92. Interacts with POLR2E/RPB5, RUVBL2 and RUVBL1. Interacts with PFDN2, PFDN4 and STAP1; the interactions are phosphorylation-dependent and occur in a growth-dependent manner in the mitochondrion. Interacts with UXT. Interacts with PPP1CC; the interaction is phosphorylation-dependent and occurs in a growth factor-dependent manner. Interacts (via the middle C-terminal region) with GTF2F1 and GTF2F2. Interacts with DMAP1. Interacts with TSC1 and TSC2. Interacts with PRPF8 and EFTUD2 in a ZNHIT2-dependent manner. In terms of processing, phosphorylated. Phosphorylation occurs essentially on serine residues. Phosphorylation occurs in response to androgen treatment in prostate cancer cells in a mTOR-dependent manner. Phosphorylated; hyperhosphorylated in mitochondria in a mTORC-dependent signaling pathway. Phosphorylated at Ser-372 by RPS6KB1 in a growth factor- and rapamycin-dependent manner. S6K1-mediated mitochondrial phosphorylation at Ser-372 disrupts the URI1-PPP1CC complex in the mitochondrion, relieves PPP1CC phosphatase inhibition activity and hence engages a negative feedback diminishing RPS6KB1 kinase activity, preventing sustained S6K1-dependent signaling. Ubiquitous. Expressed in ovarian cancers (at protein level). Expressed strongly in skeletal muscle. Expressed weakly in brain, heart, pancreas and in prostate epithelial cells.

The protein localises to the nucleus. It is found in the cytoplasm. The protein resides in the mitochondrion. Its subcellular location is the cell projection. It localises to the dendrite. Involved in gene transcription regulation. Acts as a transcriptional repressor in concert with the corepressor UXT to regulate androgen receptor (AR) transcription. May act as a tumor suppressor to repress AR-mediated gene transcription and to inhibit anchorage-independent growth in prostate cancer cells. Required for cell survival in ovarian cancer cells. Together with UXT, associates with chromatin to the NKX3-1 promoter region. Antagonizes transcriptional modulation via hepatitis B virus X protein. Its function is as follows. Plays a central role in maintaining S6K1 signaling and BAD phosphorylation under normal growth conditions thereby protecting cells from potential deleterious effects of sustained S6K1 signaling. The URI1-PPP1CC complex acts as a central component of a negative feedback mechanism that counteracts excessive S6K1 survival signaling to BAD in response to growth factors. Mediates inhibition of PPP1CC phosphatase activity in mitochondria. Coordinates the regulation of nutrient-sensitive gene expression availability in a mTOR-dependent manner. Seems to be a scaffolding protein able to assemble a prefoldin-like complex that contains PFDs and proteins with roles in transcription and ubiquitination. This chain is Unconventional prefoldin RPB5 interactor 1 (URI1), found in Homo sapiens (Human).